A 317-amino-acid chain; its full sequence is Apolipoprotein E (317 aa).

Residues 1–18 form the signal peptide; it reads MKVLWAALLVTFLAGCQA. 8 repeat units span residues 80 to 101, 102 to 123, 124 to 145, 146 to 167, 168 to 189, 190 to 211, 212 to 233, and 234 to 255. The segment at 80 to 255 is 8 X 22 AA approximate tandem repeats; it reads ALMDETMKEL…RLDEVKEQVA (176 aa). At Met-143 the chain carries Methionine sulfoxide. Phosphoserine is present on Ser-147. Residues 158–168 form an LDL and other lipoprotein receptors binding region; the sequence is HLRKLRKRLLR. Residue 162 to 165 participates in heparin binding; the sequence is LRKR. Residues 210-290 form a lipid-binding and lipoprotein association region; sequence AATVGSVAGK…SWFEPLVEDM (81 aa). Residue 229–236 participates in heparin binding; the sequence is GERLRARM. The interval 266-317 is homooligomerization; sequence QQIRLQAEAFQARLKSWFEPLVEDMQRQWAGLVEKVQAAVGTSAAPVPSDNH. The interval 278–290 is specificity for association with VLDL; the sequence is RLKSWFEPLVEDM.

This sequence belongs to the apolipoprotein A1/A4/E family. Homotetramer. May interact with ABCA1; functionally associated with ABCA1 in the biogenesis of HDLs. May interact with APP/A4 amyloid-beta peptide; the interaction is extremely stable in vitro but its physiological significance is unclear. May interact with MAPT. May interact with MAP2. In the cerebrospinal fluid, interacts with secreted SORL1. Interacts with PMEL; this allows the loading of PMEL luminal fragment on ILVs to induce fibril nucleation. APOE exists as multiple glycosylated and sialylated glycoforms within cells and in plasma. The extent of glycosylation and sialylation are tissue and context specific. In terms of processing, glycated in plasma VLDL. Post-translationally, phosphorylated by FAM20C in the extracellular medium.

The protein localises to the secreted. The protein resides in the extracellular space. Its subcellular location is the extracellular matrix. It localises to the extracellular vesicle. It is found in the endosome. The protein localises to the multivesicular body. Its function is as follows. APOE is an apolipoprotein, a protein associating with lipid particles, that mainly functions in lipoprotein-mediated lipid transport between organs via the plasma and interstitial fluids. APOE is a core component of plasma lipoproteins and is involved in their production, conversion and clearance. Apolipoproteins are amphipathic molecules that interact both with lipids of the lipoprotein particle core and the aqueous environment of the plasma. As such, APOE associates with chylomicrons, chylomicron remnants, very low density lipoproteins (VLDL) and intermediate density lipoproteins (IDL) but shows a preferential binding to high-density lipoproteins (HDL). It also binds a wide range of cellular receptors including the LDL receptor/LDLR, the LDL receptor-related proteins LRP1, LRP2 and LRP8 and the very low-density lipoprotein receptor/VLDLR that mediate the cellular uptake of the APOE-containing lipoprotein particles. Finally, APOE also has a heparin-binding activity and binds heparan-sulfate proteoglycans on the surface of cells, a property that supports the capture and the receptor-mediated uptake of APOE-containing lipoproteins by cells. A main function of APOE is to mediate lipoprotein clearance through the uptake of chylomicrons, VLDLs, and HDLs by hepatocytes. APOE is also involved in the biosynthesis by the liver of VLDLs as well as their uptake by peripheral tissues ensuring the delivery of triglycerides and energy storage in muscle, heart and adipose tissues. By participating in the lipoprotein-mediated distribution of lipids among tissues, APOE plays a critical role in plasma and tissues lipid homeostasis. APOE is also involved in two steps of reverse cholesterol transport, the HDLs-mediated transport of cholesterol from peripheral tissues to the liver, and thereby plays an important role in cholesterol homeostasis. First, it is functionally associated with ABCA1 in the biogenesis of HDLs in tissues. Second, it is enriched in circulating HDLs and mediates their uptake by hepatocytes. APOE also plays an important role in lipid transport in the central nervous system, regulating neuron survival and sprouting. The polypeptide is Apolipoprotein E (APOE) (Pongo pygmaeus (Bornean orangutan)).